The sequence spans 1156 residues: Condensin-2 complex subunit G2 (1156 aa).

An HEAT repeat occupies 460–498; sequence MLPALKFCLHDNSEKVRVAFVDMLLKIKAVRAAKFWKIC. The tract at residues 587–611 is disordered; that stretch reads PNEDTEDEDDDEGDGEGIVRGDSEK. Residues 589-601 are compositionally biased toward acidic residues; it reads EDTEDEDDDEGDG.

In terms of assembly, component of the condensin-2 complex, which contains the smc2 and smc4 heterodimer, and three non SMC subunits that probably regulate the complex: ncaph2, ncapd3 and ncapg2.

It localises to the nucleus. Regulatory subunit of the condensin-2 complex, a complex which establishes mitotic chromosome architecture and is involved in physical rigidity of the chromatid axis. In Xenopus laevis (African clawed frog), this protein is Condensin-2 complex subunit G2 (ncapg2).